The chain runs to 325 residues: Beta-1,3-galactosyltransferase 6 (325 aa).

The Cytoplasmic segment spans residues 1-11; that stretch reads MKVFRRAWRHR. The chain crosses the membrane as a helical; Signal-anchor for type II membrane protein span at residues 12–30; it reads VALGLGGLAFCGTTLLYLA. At 31-325 the chain is on the lumenal side; sequence RCASEGETPS…QCCQRKEGVP (295 aa). Asparagine 127 carries an N-linked (GlcNAc...) asparagine glycan.

The protein belongs to the glycosyltransferase 31 family. Mn(2+) serves as cofactor.

The protein localises to the golgi apparatus. It localises to the golgi stack membrane. The catalysed reaction is 3-O-(beta-D-galactosyl-(1-&gt;4)-beta-D-xylosyl)-L-seryl-[protein] + UDP-alpha-D-galactose = 3-O-(beta-D-galactosyl-(1-&gt;3)-beta-D-galactosyl-(1-&gt;4)-beta-D-xylosyl)-L-seryl-[protein] + UDP + H(+). It functions in the pathway glycan metabolism; chondroitin sulfate biosynthesis. Its pathway is glycan metabolism; heparan sulfate biosynthesis. In terms of biological role, beta-1,3-galactosyltransferase that transfers galactose from UDP-galactose to substrates with a terminal beta-linked galactose residue. Has a preference for galactose-beta-1,4-xylose that is found in the linker region of glycosaminoglycans, such as heparan sulfate and chondroitin sulfate. Has no activity towards substrates with terminal glucosamine or galactosamine residues. This chain is Beta-1,3-galactosyltransferase 6 (B3galt6), found in Mus musculus (Mouse).